The primary structure comprises 604 residues: uncharacterized protein (604 aa).

Residues 45–329 form the ABC transmembrane type-1 domain; the sequence is LPLSFLTVLI…LGQVYNQLLM (285 aa). Helical transmembrane passes span 49 to 69, 82 to 102, 162 to 182, 184 to 204, 273 to 293, and 297 to 317; these read FLTVLIGTAVKLVIPILIGVY, LLIQLIFIISGLYVLNYAANV, VINLLTDLLLLAGVIIILFTL, PELTIAIMVTLPIMFFISTSL, LVEMTNAIGTAVLIWYGATLI, and TITIGVFVSFAFYLGMFWEPI. The region spanning 363-597 is the ABC transporter domain; sequence ISFEEVEFSY…GGIYAGLVKA (235 aa). Residue 396–403 participates in ATP binding; that stretch reads GHTGSGKT.

Belongs to the ABC transporter superfamily.

The protein resides in the cell membrane. This is an uncharacterized protein from Bacillus subtilis (strain 168).